The following is a 72-amino-acid chain: Translation initiation factor IF-1 (72 aa).

Residues M1 to K72 form the S1-like domain. Residue Y60 is modified to Phosphotyrosine.

The protein belongs to the IF-1 family. As to quaternary structure, component of the 30S ribosomal translation pre-initiation complex which assembles on the 30S ribosome in the order IF-2 and IF-3, IF-1 and N-formylmethionyl-tRNA(fMet); mRNA recruitment can occur at any time during PIC assembly.

It is found in the cytoplasm. In terms of biological role, one of the essential components for the initiation of protein synthesis. Stabilizes the binding of IF-2 and IF-3 on the 30S subunit to which N-formylmethionyl-tRNA(fMet) subsequently binds. Helps modulate mRNA selection, yielding the 30S pre-initiation complex (PIC). Upon addition of the 50S ribosomal subunit IF-1, IF-2 and IF-3 are released leaving the mature 70S translation initiation complex. In Bacillus thuringiensis (strain Al Hakam), this protein is Translation initiation factor IF-1.